We begin with the raw amino-acid sequence, 464 residues long: Glycine--tRNA ligase (464 aa).

Residues Arg-104 and Glu-175 each contribute to the substrate site. ATP is bound by residues 207 to 209 (RNE), 217 to 222 (FRTREF), 292 to 293 (EL), and 336 to 339 (GVNR). 222–226 (FEQME) provides a ligand contact to substrate. 332–336 (EPALG) lines the substrate pocket.

It belongs to the class-II aminoacyl-tRNA synthetase family. As to quaternary structure, homodimer.

The protein localises to the cytoplasm. The enzyme catalyses tRNA(Gly) + glycine + ATP = glycyl-tRNA(Gly) + AMP + diphosphate. Catalyzes the attachment of glycine to tRNA(Gly). This Leptospira borgpetersenii serovar Hardjo-bovis (strain JB197) protein is Glycine--tRNA ligase.